The chain runs to 209 residues: Ribonuclease HII (209 aa).

Residues 18-209 (GLVAGVDEVG…FKPVKALLER (192 aa)) form the RNase H type-2 domain. Residues Asp-24, Glu-25, and Asp-116 each contribute to the a divalent metal cation site.

It belongs to the RNase HII family. It depends on Mn(2+) as a cofactor. Requires Mg(2+) as cofactor.

It is found in the cytoplasm. It catalyses the reaction Endonucleolytic cleavage to 5'-phosphomonoester.. Endonuclease that specifically degrades the RNA of RNA-DNA hybrids. This Shewanella sp. (strain ANA-3) protein is Ribonuclease HII.